Reading from the N-terminus, the 337-residue chain is Phenylalanine--tRNA ligase alpha subunit (337 aa).

A Mg(2+)-binding site is contributed by Glu258.

The protein belongs to the class-II aminoacyl-tRNA synthetase family. Phe-tRNA synthetase alpha subunit type 1 subfamily. As to quaternary structure, tetramer of two alpha and two beta subunits. The cofactor is Mg(2+).

The protein localises to the cytoplasm. The catalysed reaction is tRNA(Phe) + L-phenylalanine + ATP = L-phenylalanyl-tRNA(Phe) + AMP + diphosphate + H(+). The sequence is that of Phenylalanine--tRNA ligase alpha subunit from Burkholderia mallei (strain ATCC 23344).